A 179-amino-acid polypeptide reads, in one-letter code: Peptide deformylase 2 (179 aa).

Fe cation-binding residues include Cys-104 and His-146. The active site involves Glu-147. His-150 is a Fe cation binding site.

The protein belongs to the polypeptide deformylase family. The cofactor is Fe(2+).

The enzyme catalyses N-terminal N-formyl-L-methionyl-[peptide] + H2O = N-terminal L-methionyl-[peptide] + formate. In terms of biological role, removes the formyl group from the N-terminal Met of newly synthesized proteins. Requires at least a dipeptide for an efficient rate of reaction. N-terminal L-methionine is a prerequisite for activity but the enzyme has broad specificity at other positions. This chain is Peptide deformylase 2, found in Streptomyces coelicolor (strain ATCC BAA-471 / A3(2) / M145).